The chain runs to 1407 residues: DNA-directed RNA polymerase subunit beta' (1407 aa).

Zn(2+) contacts are provided by Cys70, Cys72, Cys85, and Cys88. Asp460, Asp462, and Asp464 together coordinate Mg(2+). Positions 814, 888, 895, and 898 each coordinate Zn(2+).

This sequence belongs to the RNA polymerase beta' chain family. As to quaternary structure, the RNAP catalytic core consists of 2 alpha, 1 beta, 1 beta' and 1 omega subunit. When a sigma factor is associated with the core the holoenzyme is formed, which can initiate transcription. Mg(2+) is required as a cofactor. Requires Zn(2+) as cofactor.

The enzyme catalyses RNA(n) + a ribonucleoside 5'-triphosphate = RNA(n+1) + diphosphate. Functionally, DNA-dependent RNA polymerase catalyzes the transcription of DNA into RNA using the four ribonucleoside triphosphates as substrates. The polypeptide is DNA-directed RNA polymerase subunit beta' (Erwinia tasmaniensis (strain DSM 17950 / CFBP 7177 / CIP 109463 / NCPPB 4357 / Et1/99)).